We begin with the raw amino-acid sequence, 237 residues long: MIASLDELYHSELFFLPVMDENAWLVGLAIIATFAAEDGAVRMPTELVAPRLSVEEQYCLFVEKLALLETCQHFFIQHKLIAWLNLPPAISDLLLLDSELFSRAARFPFLELAINENYPGLNQGKNNETLANLAMHFPLMLANFGSGEASTKAIFDGLFKRVMLDKNFIQQRAEMISFEPFMHAIVAQISSSCESLMIAGIDTEAMFARAAPLGFSAFQGGLWPPVPVSQLIKLVQR.

The region spanning 1–237 (MIASLDELYH…VSQLIKLVQR (237 aa)) is the EAL domain.

It belongs to the YdiV family. As to quaternary structure, interacts with FlhD in the FlhC(2)FlhD(4) heterohexamer, inhibiting its ability to activate transcription.

In terms of biological role, acts as an anti-FlhC(2)FlhD(4) factor by binding to FlhD, decreasing its ability to bind DNA, and thus negatively regulates expression of flagellar class II operons, decreasing motility in nutrient-poor medium. Required for resistance to host phagocyte oxidase. The protein is Anti-FlhC(2)FlhD(4) factor YdiV (ydiV) of Salmonella choleraesuis (strain SC-B67).